A 416-amino-acid polypeptide reads, in one-letter code: Queuine tRNA-ribosyltransferase accessory subunit 2 (416 aa).

Zn(2+) is bound by residues Cys323, Cys325, Cys328, and His354.

This sequence belongs to the queuine tRNA-ribosyltransferase family. QTRT2 subfamily. As to quaternary structure, heterodimer of a catalytic subunit and an accessory subunit. Requires Zn(2+) as cofactor.

It is found in the cytoplasm. Its function is as follows. Non-catalytic subunit of the queuine tRNA-ribosyltransferase (TGT) that catalyzes the base-exchange of a guanine (G) residue with queuine (Q) at position 34 (anticodon wobble position) in tRNAs with GU(N) anticodons (tRNA-Asp, -Asn, -His and -Tyr), resulting in the hypermodified nucleoside queuosine (7-(((4,5-cis-dihydroxy-2-cyclopenten-1-yl)amino)methyl)-7-deazaguanosine). This chain is Queuine tRNA-ribosyltransferase accessory subunit 2, found in Drosophila mojavensis (Fruit fly).